The following is a 100-amino-acid chain: Aspartyl/glutamyl-tRNA(Asn/Gln) amidotransferase subunit C (100 aa).

Belongs to the GatC family. As to quaternary structure, heterotrimer of A, B and C subunits.

It catalyses the reaction L-glutamyl-tRNA(Gln) + L-glutamine + ATP + H2O = L-glutaminyl-tRNA(Gln) + L-glutamate + ADP + phosphate + H(+). The enzyme catalyses L-aspartyl-tRNA(Asn) + L-glutamine + ATP + H2O = L-asparaginyl-tRNA(Asn) + L-glutamate + ADP + phosphate + 2 H(+). In terms of biological role, allows the formation of correctly charged Asn-tRNA(Asn) or Gln-tRNA(Gln) through the transamidation of misacylated Asp-tRNA(Asn) or Glu-tRNA(Gln) in organisms which lack either or both of asparaginyl-tRNA or glutaminyl-tRNA synthetases. The reaction takes place in the presence of glutamine and ATP through an activated phospho-Asp-tRNA(Asn) or phospho-Glu-tRNA(Gln). This chain is Aspartyl/glutamyl-tRNA(Asn/Gln) amidotransferase subunit C, found in Streptococcus suis (strain 98HAH33).